The primary structure comprises 952 residues: Microtubule-associated protein 6 (952 aa).

The interval 1-15 (MAWPCITRACCIARF) is calmodulin-binding. 3 S-palmitoyl cysteine lipidation sites follow: C5, C10, and C11. Disordered regions lie at residues 37–457 (TEHP…RAVA) and 486–952 (IKPV…EGSP). Over residues 41-55 (GAPPQPPAPPQPGLA) the composition is skewed to pro residues. A Phosphoserine modification is found at S98. The segment covering 105–117 (ASGSTSGSGPADS) has biased composition (low complexity). The segment at 116–139 (DSVMRQDYRAWKVQRPEPSCRPRS) is mn 1. Positions 119 to 139 (MRQDYRAWKVQRPEPSCRPRS) are enriched in basic and acidic residues. Residues 124–138 (RAWKVQRPEPSCRPR) form a calmodulin-binding region. The residue at position 141 (Y141) is a Phosphotyrosine. A compositionally biased stretch (basic and acidic residues) spans 147-171 (PFERETQYQKDFRAWPLPRRGDHPW). The interval 151–174 (ETQYQKDFRAWPLPRRGDHPWIPK) is mn 2. The segment at 160–174 (AWPLPRRGDHPWIPK) is calmodulin-binding. S185 is modified (phosphoserine). Residues 187 to 201 (PVLGMPKRRPQSQER) are calmodulin-binding. Phosphoserine is present on S207. A compositionally biased stretch (low complexity) spans 221-230 (VPAAGKASGA). One copy of the Mc-1 repeat lies at 222 to 267 (PAAGKASGADQRDTRRKAGPAWMVTRTEGHEEKPLPPAQSQTQEGG). The 5 X approximate tandem repeat Mc stretch occupies residues 222–451 (PAAGKASGAD…HAQGTGPEGG (230 aa)). 8 calmodulin-binding regions span residues 235-249 (TRRKAGPAWMVTRTE), 280-294 (DTRRKAGPAWMVTRT), 325-339 (RDTRRKAGPAWMVTR), 373-387 (TRRKAGPAWMVTRTE), 421-435 (RKAGPAWMVRRSEGH), 481-495 (RAWTDIKPVKPIKAK), 532-546 (RRRIRSLYSEPFKES), and 559-573 (PKKTSTSQKPLRKAK). Residues 268–313 (PAAGKASGADQRDTRRKAGPAWMVTRTEGHEEKPLPPAQSQTQEGG) form a Mc-2 repeat. A Mc-3 repeat occupies 314 to 359 (PAAGKASGADQRDTRRKAGPAWMVTRTEGHEETPLPPAQSQTQEGG). A Mc-4 repeat occupies 360–405 (PAAGKASGADQRDTRRKAGPAWMVTRTEGHEETPLPPAQSQTQEGG). A Mc-5 repeat occupies 406–451 (PAAGKASGADERDTRRKAGPAWMVRRSEGHEQTTAAHAQGTGPEGG). The tract at residues 473 to 496 (SSSYRNEFRAWTDIKPVKPIKAKP) is mn 3. Residues 542-551 (PFKESPKVEK) show a composition bias toward basic and acidic residues. Positions 552-567 (PSVQSSKPKKTSTSQK) are enriched in low complexity. S590 carries the post-translational modification Phosphoserine. The segment covering 595–621 (KPDDKEQSKEMNNKLAEAKESRVKPTS) has biased composition (basic and acidic residues). S681 carries the post-translational modification Phosphoserine. Residues 711 to 725 (KDQDHMASELLKNKD) are compositionally biased toward basic and acidic residues. Residue S736 is modified to Phosphoserine. Residues 761 to 775 (APAPTPLKDPGPVIP) are compositionally biased toward pro residues. 2 stretches are compositionally biased toward basic and acidic residues: residues 776–792 (EPEKDGAPMVPERRKDQ) and 821–831 (PAKDTGTDLKG). Residues 903-915 (VPAPTKDPGPTAP) are compositionally biased toward pro residues. Phosphoserine is present on S951.

It belongs to the STOP family. Interacts with calmodulin (via C-terminus); the interaction is dependent on Ca(2+). Interacts (via C-terminus) with TMEM106B (via N-terminus). Interacts with ZDHHC13 (via ANK repeats). Interacts with ZDHHC17 (via ANK repeats). In terms of processing, palmitoylated. Probably depalmitoylated by ABHD17A, ABHD17B and ABHD17C. During neuronal polarization, palmitoylation and depalmitoylation cycles regulate MAP6 shuttling between secretory vesicles and microtubules, and its polarized distribution in the axon. In terms of tissue distribution, isoform 1 is specifically expressed in adult brain. Isoform 2 is predominantly expressed in embryonic brain; expression persists at low levels in the adult brain.

The protein localises to the cytoplasm. The protein resides in the cytoskeleton. It is found in the golgi apparatus. Its subcellular location is the cell projection. It localises to the axon. The protein localises to the dendrite. The protein resides in the cytoplasmic vesicle. It is found in the secretory vesicle membrane. In terms of biological role, involved in microtubule stabilization in many cell types, including neuronal cells. Specifically has microtubule cold stabilizing activity. Involved in dendrite morphogenesis and maintenance by regulating lysosomal trafficking via its interaction with TMEM106B. Regulates KIF5A-mediated axonal cargo transport. Regulates axonal growth during neuron polarization. The polypeptide is Microtubule-associated protein 6 (Map6) (Rattus norvegicus (Rat)).